A 151-amino-acid polypeptide reads, in one-letter code: Phospholipase A2 inhibitor BjussuMIP (151 aa).

Positions 1-4 are cleaved as a signal peptide; sequence LANG. In terms of domain architecture, C-type lectin spans 31 to 146; the sequence is LKYAFLTVHK…CDENLLVVCE (116 aa). Disulfide bonds link cysteine 68-cysteine 145 and cysteine 123-cysteine 137. N-linked (GlcNAc...) asparagine glycosylation occurs at asparagine 107.

The protein belongs to the alpha-type phospholipase A2 inhibitor family. Oligomer. In terms of tissue distribution, expressed by the liver.

It localises to the secreted. Inhibits enzymatic, anticoagulant, edema formation, myotoxicity activities induced by snakes phospholipase A2. Is oligomeric, but it is probable that each of its subunits can bind and inactive a PLA2 molecule. In Bothrops jararacussu (Jararacussu), this protein is Phospholipase A2 inhibitor BjussuMIP.